The following is a 193-amino-acid chain: Rho-related GTP-binding protein RhoA-C (193 aa).

GTP is bound by residues 12–19 (GDGACGKT), 30–37 (FPEVYVPT), 59–63 (DTAGQ), 117–120 (NKKD), and 160–162 (SAK). (Microbial infection) O-linked (GlcNAc) tyrosine; by Yersinia Afp18 glycosylation is present at Tyr-34. The residue at position 190 (Cys-190) is a Cysteine methyl ester. Residue Cys-190 is the site of S-geranylgeranyl cysteine attachment. The propeptide at 191–193 (LLL) is removed in mature form.

It belongs to the small GTPase superfamily. Rho family. In terms of processing, (Microbial infection) Glycosylated at Tyr-34 by Yersinia ruckeri toxin Afp18. Mono-O-GlcNAcylation by Afp18 inhibits RhoA activation by guanine nucleotide exchange factors and blocks RhoA signaling.

The protein resides in the cell membrane. Functionally, regulates a signal transduction pathway linking plasma membrane receptors to the assembly of focal adhesions and actin stress fibers. The sequence is that of Rho-related GTP-binding protein RhoA-C from Danio rerio (Zebrafish).